The following is a 490-amino-acid chain: MTATIDNTQSQATTGGVGRVARVIGPVVDVEFAADELPEIYNALTVDVDFATASEQVEGETKRTLTLEVAQHIGDNMVRAISLQPTDGLVRGALVRDTGAPISVPVGDVTKGHVFNVLGQTLDVPRIEVTERWPIHRPAPAFDQLEAKTEMLETGIKVIDLLTPYVRGGKIGLFGGAGVGKTVLIQEMIHRVAKNFGGVSVFAGVGERTREGNDLFLEMTESGVINDTVLVFGQMDEPPGCRLRVGLAALTMAEYFRDVKRQDVLLFIDNIFRFVQAGSEVSTLLGRMPSAVGYQPTLADEMGALQERITSTRGHSITSVQAIYVPADDITDPAPHTTFTHLDATTVLSRPISEKGIYPAVDPLDSTSRILDPQFIGEEHFRVANQVKQILQRYKDLQDIIAILGIDELSEEDKVIVGRARRIERFLSQNMFVAEAFTGQPGSFVPLDETIDAFRRLCEGELDHLPEQAFFMCGGLDDVQAKAKRLAERS.

175–182 (GGAGVGKT) provides a ligand contact to ATP.

The protein belongs to the ATPase alpha/beta chains family. As to quaternary structure, F-type ATPases have 2 components, CF(1) - the catalytic core - and CF(0) - the membrane proton channel. CF(1) has five subunits: alpha(3), beta(3), gamma(1), delta(1), epsilon(1). CF(0) has three main subunits: a(1), b(2) and c(9-12). The alpha and beta chains form an alternating ring which encloses part of the gamma chain. CF(1) is attached to CF(0) by a central stalk formed by the gamma and epsilon chains, while a peripheral stalk is formed by the delta and b chains.

It is found in the cell membrane. The catalysed reaction is ATP + H2O + 4 H(+)(in) = ADP + phosphate + 5 H(+)(out). Its function is as follows. Produces ATP from ADP in the presence of a proton gradient across the membrane. The catalytic sites are hosted primarily by the beta subunits. The polypeptide is ATP synthase subunit beta (Acidothermus cellulolyticus (strain ATCC 43068 / DSM 8971 / 11B)).